Consider the following 333-residue polypeptide: Sphingomyelinase C (333 aa).

The N-terminal stretch at 1–26 (MKGKLLKGVLSLGVGLGALYSGTSAQ) is a signal peptide. Residues Cys-150 and Cys-186 are joined by a disulfide bond.

This sequence belongs to the neutral sphingomyelinase family. Requires Mg(2+) as cofactor. In terms of processing, the N-terminus is blocked.

It localises to the secreted. It carries out the reaction a sphingomyelin + H2O = phosphocholine + an N-acylsphing-4-enine + H(+). Activated by cobalt and manganese ions. Required, with sphingomyelinase, to effect target cell lysis (hemolysis). The protein is Sphingomyelinase C (cerB) of Bacillus cereus.